Here is a 405-residue protein sequence, read N- to C-terminus: Sesquiterpene synthase 16 (405 aa).

Mg(2+) contacts are provided by Asp-155, Asp-159, and Glu-309. The short motif at 155–159 is the DDXXD motif element; the sequence is DDTYD.

It belongs to the terpene synthase family. Tpsa subfamily. It depends on Mg(2+) as a cofactor. Mn(2+) is required as a cofactor.

The protein operates within secondary metabolite biosynthesis; terpenoid biosynthesis. Sesquiterpene synthase involved in the biosynthesis of volatile compounds. No activity detected with geranyl diphosphate (GPP) and farnesyl diphosphate (FPP) as substrates. This chain is Sesquiterpene synthase 16, found in Solanum habrochaites (Wild tomato).